A 141-amino-acid polypeptide reads, in one-letter code: Large ribosomal subunit protein uL11 (141 aa).

This sequence belongs to the universal ribosomal protein uL11 family. In terms of assembly, part of the ribosomal stalk of the 50S ribosomal subunit. Interacts with L10 and the large rRNA to form the base of the stalk. L10 forms an elongated spine to which L12 dimers bind in a sequential fashion forming a multimeric L10(L12)X complex. Post-translationally, one or more lysine residues are methylated.

In terms of biological role, forms part of the ribosomal stalk which helps the ribosome interact with GTP-bound translation factors. This is Large ribosomal subunit protein uL11 from Clostridium novyi (strain NT).